A 137-amino-acid chain; its full sequence is Large ribosomal subunit protein uL16 (137 aa).

Belongs to the universal ribosomal protein uL16 family. As to quaternary structure, part of the 50S ribosomal subunit.

Its function is as follows. Binds 23S rRNA and is also seen to make contacts with the A and possibly P site tRNAs. This Leptospira biflexa serovar Patoc (strain Patoc 1 / Ames) protein is Large ribosomal subunit protein uL16.